Consider the following 609-residue polypeptide: Neutral protease (609 aa).

The N-terminal stretch at 1–24 (MNKTQRHINWLLAVSAATALPVTA) is a signal peptide. The propeptide occupies 25–196 (AEMINVNDGS…VLQTWDGLNH (172 aa)). Histidine 343 contributes to the Zn(2+) binding site. Glutamate 344 is a catalytic residue. Histidine 347 and glutamate 367 together coordinate Zn(2+). Histidine 426 serves as the catalytic Proton donor.

The protein belongs to the peptidase M4 family. Zn(2+) is required as a cofactor.

The protein resides in the secreted. It catalyses the reaction Preferential cleavage of bonds with bulky hydrophobic groups in P2 and P1'. Phe at P1' is the most favored residue, which distinguished this enzyme from thermolysin.. Its function is as follows. Extracellular zinc metalloprotease. This chain is Neutral protease (nprV), found in Vibrio proteolyticus (Aeromonas proteolytica).